The following is a 134-amino-acid chain: Profilin-1 (134 aa).

A disulfide bridge connects residues C13 and C118. An Involved in PIP2 interaction motif is present at residues 84 to 100 (AVIRGKKGSGGITTKKT). The residue at position 114 (T114) is a Phosphothreonine.

It belongs to the profilin family. As to quaternary structure, occurs in many kinds of cells as a complex with monomeric actin in a 1:1 ratio. In terms of processing, phosphorylated by MAP kinases.

It localises to the cytoplasm. The protein localises to the cytoskeleton. Binds to actin and affects the structure of the cytoskeleton. At high concentrations, profilin prevents the polymerization of actin, whereas it enhances it at low concentrations. The polypeptide is Profilin-1 (Olea europaea (Common olive)).